An 854-amino-acid polypeptide reads, in one-letter code: DNA mismatch repair protein MutS (854 aa).

ATP is bound at residue 614–621; the sequence is GPNMGGKS.

It belongs to the DNA mismatch repair MutS family.

This protein is involved in the repair of mismatches in DNA. It is possible that it carries out the mismatch recognition step. This protein has a weak ATPase activity. This is DNA mismatch repair protein MutS from Yersinia pestis bv. Antiqua (strain Antiqua).